A 225-amino-acid polypeptide reads, in one-letter code: Chlorosome protein J (225 aa).

The 2Fe-2S ferredoxin-type domain occupies 1 to 95 (MIIYINDKPC…TIRVLTRAEK (95 aa)). The [2Fe-2S] cluster site is built by C33, C39, C42, and C77.

[2Fe-2S] cluster is required as a cofactor.

The protein resides in the chlorosome. Could play a direct role in the oxidation or reduction of the quenching species formed in the chlorosome. The polypeptide is Chlorosome protein J (csmJ) (Chlorobaculum tepidum (strain ATCC 49652 / DSM 12025 / NBRC 103806 / TLS) (Chlorobium tepidum)).